We begin with the raw amino-acid sequence, 179 residues long: uncharacterized protein (179 aa).

This is an uncharacterized protein from Bacillus subtilis (strain 168).